A 473-amino-acid chain; its full sequence is MAP kinase-activated protein kinase 5 (473 aa).

A Protein kinase domain is found at 22–304; that stretch reads INWTQKLGAG…IEGVLDHPWL (283 aa). Residues 28–36 and Lys-51 each bind ATP; that span reads LGAGISGPV. The residue at position 115 (Ser-115) is a Phosphoserine; by PKA. Catalysis depends on Asp-148, which acts as the Proton acceptor. Thr-182 carries the post-translational modification Phosphothreonine; by MAPK11, MAPK14, MAPK4, MAPK6 and PKA. Residues Ser-212 and Ser-354 each carry the phosphoserine modification. Residues 409–440 are a coiled coil; that stretch reads ENEDEKLNEVMQEAWKYNRECKLLRDALQSFS.

This sequence belongs to the protein kinase superfamily. CAMK Ser/Thr protein kinase family. Interacts with SQSTM1. Interacts with ERK3/MAPK6 and ERK4/MAPK4 (via FRIEDE motif); the interaction is direct. Interacts with YWHAE; the interaction prevents phosphorylation of HSP27/HSPB1 leading to disrupt F-actin polymerization. Phosphorylated on Thr-182 ERK3/MAPK6 or ERK4/MAPK4; which is the regulatory phosphorylation site and is located on the T-loop/loop 12, leading to activation. Phosphorylation at Thr-182 by p38-alpha/MAPK14, p38-beta/MAPK11 is subject to debate. Phosphorylated at Ser-115 by PKA/PRKACA, leading to localization to the cytoplasm. Autophosphorylated. In terms of tissue distribution, expressed ubiquitously.

The protein resides in the cytoplasm. Its subcellular location is the nucleus. It carries out the reaction L-seryl-[protein] + ATP = O-phospho-L-seryl-[protein] + ADP + H(+). It catalyses the reaction L-threonyl-[protein] + ATP = O-phospho-L-threonyl-[protein] + ADP + H(+). With respect to regulation, activated following phosphorylation at Thr-182 by p38-alpha/MAPK14, p38-beta/MAPK11, ERK2/MAPK1, ERK3/MAPK6, and ERK4/MAPK4. Activated by stress-related extracellular stimuli; such as H(2)O(2), arsenite, anisomycin TNF alpha and also PMA and the calcium ionophore A23187; but to a lesser extent. In vitro, activated by SQSTM1. Inhibited by diterpenoid alkaloid noroxoaconitine. Tumor suppressor serine/threonine-protein kinase involved in mTORC1 signaling and post-transcriptional regulation. Phosphorylates FOXO3, ERK3/MAPK6, ERK4/MAPK4, HSP27/HSPB1, p53/TP53 and RHEB. Acts as a tumor suppressor by mediating Ras-induced senescence and phosphorylating p53/TP53. Involved in post-transcriptional regulation of MYC by mediating phosphorylation of FOXO3: phosphorylation of FOXO3 leads to promote nuclear localization of FOXO3, enabling expression of miR-34b and miR-34c, 2 post-transcriptional regulators of MYC that bind to the 3'UTR of MYC transcript and prevent MYC translation. Acts as a negative regulator of mTORC1 signaling by mediating phosphorylation and inhibition of RHEB. Part of the atypical MAPK signaling via its interaction with ERK3/MAPK6 or ERK4/MAPK4: the precise role of the complex formed with ERK3/MAPK6 or ERK4/MAPK4 is still unclear, but the complex follows a complex set of phosphorylation events: upon interaction with atypical MAPK (ERK3/MAPK6 or ERK4/MAPK4), ERK3/MAPK6 (or ERK4/MAPK4) is phosphorylated and then mediates phosphorylation and activation of MAPKAPK5, which in turn phosphorylates ERK3/MAPK6 (or ERK4/MAPK4). Mediates phosphorylation of HSP27/HSPB1 in response to PKA/PRKACA stimulation, inducing F-actin rearrangement. This is MAP kinase-activated protein kinase 5 (Mapkapk5) from Mus musculus (Mouse).